We begin with the raw amino-acid sequence, 1067 residues long: Probable importin subunit beta-4 (1067 aa).

The Importin N-terminal domain occupies 27–94; it reads ATRALETKYL…RSNLLDITLK (68 aa). HEAT repeat units lie at residues 159–196, 379–416, 420–457, 591–633, 890–927, and 1013–1050; these read KLLL…VLES, GNLP…EIPT, KHHA…GLDK, PFLE…SVET, PFTR…FSTE, and QHLG…EIAP.

Belongs to the importin beta family.

It localises to the cytoplasm. It is found in the nucleus. The protein resides in the nucleus envelope. Functionally, required for nuclear protein import, its predominant substrate seems to be ribosomal proteins. Binds to nucleoporins and the GTP-bound form of gsp1 (Ran). The protein is Probable importin subunit beta-4 (kap123) of Schizosaccharomyces pombe (strain 972 / ATCC 24843) (Fission yeast).